The following is a 177-amino-acid chain: Acireductone dioxygenase (177 aa).

Residues histidine 99, histidine 101, glutamate 105, and histidine 143 each coordinate Fe(2+). 4 residues coordinate Ni(2+): histidine 99, histidine 101, glutamate 105, and histidine 143.

The protein belongs to the acireductone dioxygenase (ARD) family. Monomer. Requires Fe(2+) as cofactor. Ni(2+) serves as cofactor.

The catalysed reaction is 1,2-dihydroxy-5-(methylsulfanyl)pent-1-en-3-one + O2 = 3-(methylsulfanyl)propanoate + CO + formate + 2 H(+). It carries out the reaction 1,2-dihydroxy-5-(methylsulfanyl)pent-1-en-3-one + O2 = 4-methylsulfanyl-2-oxobutanoate + formate + 2 H(+). It participates in amino-acid biosynthesis; L-methionine biosynthesis via salvage pathway; L-methionine from S-methyl-5-thio-alpha-D-ribose 1-phosphate: step 5/6. Its function is as follows. Catalyzes 2 different reactions between oxygen and the acireductone 1,2-dihydroxy-3-keto-5-methylthiopentene (DHK-MTPene) depending upon the metal bound in the active site. Fe-containing acireductone dioxygenase (Fe-ARD) produces formate and 2-keto-4-methylthiobutyrate (KMTB), the alpha-ketoacid precursor of methionine in the methionine recycle pathway. Ni-containing acireductone dioxygenase (Ni-ARD) produces methylthiopropionate, carbon monoxide and formate, and does not lie on the methionine recycle pathway. In Leptospira interrogans serogroup Icterohaemorrhagiae serovar copenhageni (strain Fiocruz L1-130), this protein is Acireductone dioxygenase.